The sequence spans 170 residues: Adenine phosphoribosyltransferase (170 aa).

This sequence belongs to the purine/pyrimidine phosphoribosyltransferase family. As to quaternary structure, homodimer.

It is found in the cytoplasm. It catalyses the reaction AMP + diphosphate = 5-phospho-alpha-D-ribose 1-diphosphate + adenine. It participates in purine metabolism; AMP biosynthesis via salvage pathway; AMP from adenine: step 1/1. Catalyzes a salvage reaction resulting in the formation of AMP, that is energically less costly than de novo synthesis. This chain is Adenine phosphoribosyltransferase, found in Lactococcus lactis subsp. cremoris (strain MG1363).